The chain runs to 248 residues: Large ribosomal subunit protein uL30B (248 aa).

The interval 1–45 (MSQKKQKIQVEQKVPENVAKKTQRDSKLRDAVAKRRTERLAANKT) is disordered. The span at 8-41 (IQVEQKVPENVAKKTQRDSKLRDAVAKRRTERLA) shows a compositional bias: basic and acidic residues.

It belongs to the universal ribosomal protein uL30 family.

Functionally, binds to G-rich structures in 28S rRNA and in mRNAs. Plays a regulatory role in the translation apparatus; inhibits cell-free translation of mRNAs. The protein is Large ribosomal subunit protein uL30B (Rpl7-2) of Paramecium tetraurelia.